The sequence spans 267 residues: Exosome complex component Rrp42 (267 aa).

Belongs to the RNase PH family. Rrp42 subfamily. In terms of assembly, component of the archaeal exosome complex. Forms a hexameric ring-like arrangement composed of 3 Rrp41-Rrp42 heterodimers. The hexameric ring associates with a trimer of Rrp4 and/or Csl4 subunits.

The protein localises to the cytoplasm. Non-catalytic component of the exosome, which is a complex involved in RNA degradation. Contributes to the structuring of the Rrp41 active site. The sequence is that of Exosome complex component Rrp42 from Methanopyrus kandleri (strain AV19 / DSM 6324 / JCM 9639 / NBRC 100938).